The chain runs to 466 residues: MPHSYDYDAIVIGSGPGGEGAAMGLVKQGARVAVIERYQNVGGGCTHWGTIPSKALRHAVSRIIEFNQNPLYSDHSRLLRSSFADILNHADNVINQQTRMRQGFYERNHCEILQGNARFVDEHTLALDCPDGSVETLTAEKFIIACGSRPYHPTDVDFTHPRIYDSDSILSMHHEPRHVLIYGAGVIGCEYASIFRGMDVKVDLINTRDRLLAFLDQEMSDSLSYHFWNSGVVIRHNEEYEKIEGCDDGVIMHLKSGKKLKADCLLYANGRTGNTDSLALQNIGLETDSRGQLKVNSMYQTAQPHVYAVGDVIGYPSLASAAYDQGRIAAQALVKGEATAHLIEDIPTGIYTIPEISSVGKTEQQLTAMKVPYEVGRAQFKHLARAQIVGMNVGTLKILFHRETKEILGIHCFGERAAEIIHIGQAIMEQKGGGNTIEYFVNTTFNYPTMAEAYRVAALNGLNRLF.

Glu36 to Cys45 is a binding site for FAD.

Belongs to the class-I pyridine nucleotide-disulfide oxidoreductase family. It depends on FAD as a cofactor.

The protein resides in the cytoplasm. The enzyme catalyses NAD(+) + NADPH = NADH + NADP(+). Conversion of NADPH, generated by peripheral catabolic pathways, to NADH, which can enter the respiratory chain for energy generation. This is Soluble pyridine nucleotide transhydrogenase from Escherichia coli O9:H4 (strain HS).